A 167-amino-acid chain; its full sequence is Ubiquitin-fold modifier-conjugating enzyme 1 (167 aa).

Catalysis depends on Cys-116, which acts as the Glycyl thioester intermediate. Lys-122 participates in a covalent cross-link: Glycyl lysine isopeptide (Lys-Gly) (interchain with G-Cter in UFM1).

Belongs to the ubiquitin-conjugating enzyme family. UFC1 subfamily. Interacts with UBA5 (via C-terminus). Interacts with UFL1. Interacts with UFM1. Interacts with KIRREL3. Post-translationally, ufmylated at Lys-122. Deufmylated by UFSP1.

In terms of biological role, E2-like enzyme which specifically catalyzes the second step in ufmylation. Accepts the ubiquitin-like modifier UFM1 from the E1 enzyme UBA5 and forms an intermediate with UFM1 via a thioester linkage. Ufmylation is involved in various processes, such as ribosome recycling, response to DNA damage, interferon response or reticulophagy (also called ER-phagy). This Bos taurus (Bovine) protein is Ubiquitin-fold modifier-conjugating enzyme 1.